A 209-amino-acid polypeptide reads, in one-letter code: N-(5'-phosphoribosyl)anthranilate isomerase (209 aa).

Belongs to the TrpF family.

The catalysed reaction is N-(5-phospho-beta-D-ribosyl)anthranilate = 1-(2-carboxyphenylamino)-1-deoxy-D-ribulose 5-phosphate. It functions in the pathway amino-acid biosynthesis; L-tryptophan biosynthesis; L-tryptophan from chorismate: step 3/5. The chain is N-(5'-phosphoribosyl)anthranilate isomerase from Erythrobacter litoralis (strain HTCC2594).